A 395-amino-acid polypeptide reads, in one-letter code: Probable L-tyrosine/L-aspartate decarboxylase (395 aa).

Lysine 242 is modified (N6-(pyridoxal phosphate)lysine).

Belongs to the group II decarboxylase family. MfnA subfamily. Requires pyridoxal 5'-phosphate as cofactor.

It carries out the reaction L-tyrosine + H(+) = tyramine + CO2. It catalyses the reaction L-aspartate + H(+) = beta-alanine + CO2. Its pathway is cofactor biosynthesis; methanofuran biosynthesis. It functions in the pathway cofactor biosynthesis; coenzyme A biosynthesis. In terms of biological role, catalyzes the decarboxylation of L-tyrosine to produce tyramine for methanofuran biosynthesis. Can also catalyze the decarboxylation of L-aspartate to produce beta-alanine for coenzyme A (CoA) biosynthesis. This Methanosarcina acetivorans (strain ATCC 35395 / DSM 2834 / JCM 12185 / C2A) protein is Probable L-tyrosine/L-aspartate decarboxylase.